Here is a 402-residue protein sequence, read N- to C-terminus: Envelope glycoprotein D (402 aa).

An N-terminal signal peptide occupies residues 1-17 (MLLAALLAALVARTTLG). 3 disulfide bridges follow: C66–C189, C105–C205, and C117–C126. Positions 238–316 (YRKNGRTLPR…RPTPRPPRPE (79 aa)) are profusion. Positions 252–350 (ATPYAIDPAR…PRTPAAPGVS (99 aa)) are disordered. Residues 269–278 (PRPRPRPRPR) are compositionally biased toward basic residues. Over residues 282-292 (EPAPATPAPPD) the composition is skewed to pro residues. The segment covering 293-304 (RLPEPATRDHAA) has biased composition (basic and acidic residues). The helical transmembrane segment at 356-376 (IVGTGTAMGALLVGVCVYIFF) threads the bilayer.

This sequence belongs to the herpesviridae glycoprotein D family. Post-translationally, not N-glycosylated.

The protein localises to the virion membrane. Functionally, envelope glycoprotein that binds to the host cell entry receptor NECTIN1, promoting the virus entry into host cells. In contrast, does not use host TNFRSF14 as receptor. May trigger fusion with host membrane, by recruiting the fusion machinery composed of gB and gH/gL. The sequence is that of Envelope glycoprotein D from Suid herpesvirus 1 (strain Rice) (SuHV-1).